We begin with the raw amino-acid sequence, 149 residues long: FKBP-type 16 kDa peptidyl-prolyl cis-trans isomerase (149 aa).

The 71-residue stretch at 2–72 (SESVQSNSAV…FSLEPDAAFG (71 aa)) folds into the PPIase FKBP-type domain.

This sequence belongs to the FKBP-type PPIase family.

The enzyme catalyses [protein]-peptidylproline (omega=180) = [protein]-peptidylproline (omega=0). Its function is as follows. PPIases accelerate the folding of proteins. Substrate specificity carried out with 'Suc-Ala-Xaa-Pro-Phe-4-nitroanilide', where Xaa is the amino acid tested, was found to be Phe &gt; Leu &gt;&gt; Ile &gt; Lys = Ala &gt; Trp &gt; His &gt;&gt; Gln. The sequence is that of FKBP-type 16 kDa peptidyl-prolyl cis-trans isomerase (fkpB) from Escherichia coli O6:H1 (strain CFT073 / ATCC 700928 / UPEC).